Consider the following 284-residue polypeptide: Tropomyosin alpha-1 chain (284 aa).

Met1 carries the N-acetylmethionine modification. Residues 1-40 (MDAIKKKMQMLKLDKENALDRAEQAESDKKASEDRSKQLE) are disordered. A coiled-coil region spans residues 1–284 (MDAIKKKMQM…DHALNDMTSI (284 aa)). Residues 12 to 40 (KLDKENALDRAEQAESDKKASEDRSKQLE) are compositionally biased toward basic and acidic residues.

In terms of assembly, homodimer. Heterodimer of an alpha (TPM1, TPM3 or TPM4) and a beta (TPM2) chain.

The protein localises to the cytoplasm. It localises to the cytoskeleton. Binds to actin filaments in muscle and non-muscle cells. Plays a central role, in association with the troponin complex, in the calcium dependent regulation of vertebrate striated muscle contraction. Smooth muscle contraction is regulated by interaction with caldesmon. In non-muscle cells is implicated in stabilizing cytoskeleton actin filaments. This is Tropomyosin alpha-1 chain from Chelon auratus (Golden grey mullet).